Consider the following 70-residue polypeptide: ATP synthase subunit c (70 aa).

2 consecutive transmembrane segments (helical) span residues 4–24 (IAAGIAAGLAAVGAGVGNGLV) and 47–67 (FLGVGLIEALPILSIVIAFLV).

It belongs to the ATPase C chain family. As to quaternary structure, F-type ATPases have 2 components, F(1) - the catalytic core - and F(0) - the membrane proton channel. F(1) has five subunits: alpha(3), beta(3), gamma(1), delta(1), epsilon(1). F(0) has three main subunits: a(1), b(2) and c(10-14). The alpha and beta chains form an alternating ring which encloses part of the gamma chain. F(1) is attached to F(0) by a central stalk formed by the gamma and epsilon chains, while a peripheral stalk is formed by the delta and b chains.

The protein resides in the cell membrane. F(1)F(0) ATP synthase produces ATP from ADP in the presence of a proton or sodium gradient. F-type ATPases consist of two structural domains, F(1) containing the extramembraneous catalytic core and F(0) containing the membrane proton channel, linked together by a central stalk and a peripheral stalk. During catalysis, ATP synthesis in the catalytic domain of F(1) is coupled via a rotary mechanism of the central stalk subunits to proton translocation. Its function is as follows. Key component of the F(0) channel; it plays a direct role in translocation across the membrane. A homomeric c-ring of between 10-14 subunits forms the central stalk rotor element with the F(1) delta and epsilon subunits. This Limosilactobacillus fermentum (strain NBRC 3956 / LMG 18251) (Lactobacillus fermentum) protein is ATP synthase subunit c.